We begin with the raw amino-acid sequence, 36 residues long: Dolichyl-diphosphooligosaccharide--protein glycosyltransferase subunit 2 (36 aa).

This sequence belongs to the SWP1 family. In terms of assembly, component of the oligosaccharyltransferase (OST) complex.

The protein localises to the endoplasmic reticulum. The protein resides in the endoplasmic reticulum membrane. It participates in protein modification; protein glycosylation. Functionally, subunit of the oligosaccharyl transferase (OST) complex that catalyzes the initial transfer of a defined glycan (Glc(3)Man(9)GlcNAc(2) in eukaryotes) from the lipid carrier dolichol-pyrophosphate to an asparagine residue within an Asn-X-Ser/Thr consensus motif in nascent polypeptide chains, the first step in protein N-glycosylation. N-glycosylation occurs cotranslationally and the complex associates with the Sec61 complex at the channel-forming translocon complex that mediates protein translocation across the endoplasmic reticulum (ER). All subunits are required for a maximal enzyme activity. The protein is Dolichyl-diphosphooligosaccharide--protein glycosyltransferase subunit 2 of Gallus gallus (Chicken).